Here is a 489-residue protein sequence, read N- to C-terminus: Cryptochrome DASH (489 aa).

In terms of domain architecture, Photolyase/cryptochrome alpha/beta spans 6–140 (PTVLVWFRND…EAKGYWGSTL (135 aa)).

The protein belongs to the DNA photolyase class-1 family. FAD is required as a cofactor. It depends on (6R)-5,10-methylene-5,6,7,8-tetrahydrofolate as a cofactor.

May have a photoreceptor function. Binds DNA; represses transcription of at least 8 genes, including slr0364 and slr1866. Does not encode a DNA photolyase function. Its disruption does not affect circadian rhythm. The chain is Cryptochrome DASH (cry) from Synechocystis sp. (strain ATCC 27184 / PCC 6803 / Kazusa).